The chain runs to 436 residues: Peptidase B (436 aa).

Mn(2+) is bound by residues K201 and D206. The active site involves K213. Mn(2+) contacts are provided by D224, D283, and E285. R287 is a catalytic residue.

Belongs to the peptidase M17 family. Homohexamer. Requires Mn(2+) as cofactor.

It is found in the cytoplasm. It catalyses the reaction Release of an N-terminal amino acid, Xaa, from a peptide or arylamide. Xaa is preferably Glu or Asp but may be other amino acids, including Leu, Met, His, Cys and Gln.. Functionally, probably plays an important role in intracellular peptide degradation. This is Peptidase B from Pectobacterium carotovorum subsp. carotovorum (strain PC1).